The chain runs to 1121 residues: MSDLVLGLDIGIGSVGVGILNKVTGEIIHKNSRIFPAAQAENNLVRRTNRQGRRLARRKKHRRVRLNRLFEESGLITDFTKISINLNPYQLRVKGLTDELSNEELFIALKNMVKHRGISYLDDASDDGNSSVGDYAQIVKENSKQLETKTPGQIQLERYQTYGQLRGDFTVEKDGKKHRLINVFPTSAYRSEALRILQTQQEFNPQITDEFINRYLEILTGKRKYYHGPGNEKSRTDYGRYRTSGETLDNIFGILIGKCTFYPDEFRAAKASYTAQEFNLLNDLNNLTVPTETKKLSKEQKNQIINYVKNEKAMGPAKLFKYIAKLLSCDVADIKGYRIDKSGKAEIHTFEAYRKMKTLETLDIEQMDRETLDKLAYVLTLNTEREGIQEALEHEFADGSFSQKQVDELVQFRKANSSIFGKGWHNFSVKLMMELIPELYETSEEQMTILTRLGKQKTTSSSNKTKYIDEKLLTEEIYNPVVAKSVRQAIKIVNAAIKEYGDFDNIVIEMARETNEDDEKKAIQKIQKANKDEKDAAMLKAANQYNGKAELPHSVFHGHKQLATKIRLWHQQGERCLYTGKTISIHDLINNSNQFEVDHILPLSITFDDSLANKVLVYATANQEKGQRTPYQALDSMDDAWSFRELKAFVRESKTLSNKKKEYLLTEEDISKFDVRKKFIERNLVDTRYASRVVLNALQEHFRAHKIDTKVSVVRGQFTSQLRRHWGIEKTRDTYHHHAVDALIIAASSQLNLWKKQKNTLVSYSEDQLLDIETGELISDDEYKESVFKAPYQHFVDTLKSKEFEDSILFSYQVDSKFNRKISDATIYATRQAKVGKDKADETYVLGKIKDIYTQDGYDAFMKIYKKDKSKFLMYRHDPQTFEKVIEPILENYPNKQINEKGKEVPCNPFLKYKEEHGYIRKYSKKGNGPEIKSLKYYDSKLGNHIDITPKDSNNKVVLQSVSPWRADVYFNKTTGKYEILGLKYADLQFEKGTGTYKISQEKYNDIKKKEGVDSDSEFKFTLYKNDLLLVKDTETKEQQLFRFLSRTMPKQKHYVELKPYDKQKFEGGEALIKVLGNVANSGQCKKGLGKSNISIYKVRTDVLGNQHIIKNEGDKPKLDF.

Asp9 (for RuvC-like nuclease domain) is an active-site residue. Mg(2+)-binding residues include Asp9, Glu509, and Glu513. The 169-residue stretch at 516 to 684 folds into the HNH Cas9-type domain; it reads EDDEKKAIQK…VRKKFIERNL (169 aa). His599 acts as the Proton acceptor for HNH nuclease domain in catalysis. Residue His738 participates in Mg(2+) binding.

This sequence belongs to the CRISPR-associated protein Cas9 family. Subtype II-A subfamily. Monomer. Binds crRNA and tracrRNA. Mg(2+) is required as a cofactor.

CRISPR (clustered regularly interspaced short palindromic repeat) is an adaptive immune system that provides protection against mobile genetic elements (viruses, transposable elements and conjugative plasmids). CRISPR clusters contain spacers, sequences complementary to antecedent mobile elements, and target invading nucleic acids. CRISPR clusters are transcribed and processed into CRISPR RNA (crRNA). In type II CRISPR systems correct processing of pre-crRNA requires a trans-encoded small RNA (tracrRNA), endogenous ribonuclease 3 (rnc) and this protein. The tracrRNA serves as a guide for ribonuclease 3-aided processing of pre-crRNA. Subsequently Cas9/crRNA/tracrRNA endonucleolytically cleaves linear or circular dsDNA target complementary to the spacer; Cas9 is inactive in the absence of the 2 guide RNAs (gRNA). Cas9 recognizes the protospacer adjacent motif (PAM) in the CRISPR repeat sequences to help distinguish self versus nonself, as targets within the bacterial CRISPR locus do not have PAMs. PAM recognition is also required for catalytic activity. Cuts target DNA when Cas9 and gRNAs are mixed. This chain is CRISPR-associated endonuclease Cas9 1, found in Streptococcus thermophilus (strain ATCC BAA-491 / LMD-9).